An 861-amino-acid chain; its full sequence is Translation initiation factor IF-2 (861 aa).

Residues 107–272 (AQKQQDIQRA…QRKKKSKVVQ (166 aa)) are disordered. Positions 115 to 128 (RAAEEAAAKERETE) are enriched in basic and acidic residues. Polar residues-rich tracts occupy residues 148–158 (SVQQEAANMDT) and 169–180 (VDESVSATTAGG). A compositionally biased stretch (basic and acidic residues) spans 210–228 (NKEDSEVRREPADAEDLKR). Basic residues predominate over residues 260-269 (RARQRKKKSK). Positions 362–531 (SRAPVVSVMG…LLQSEMLELT (170 aa)) constitute a tr-type G domain. A G1 region spans residues 371 to 378 (GHVDHGKT). 371-378 (GHVDHGKT) contributes to the GTP binding site. The interval 396–400 (GITQH) is G2. The G3 stretch occupies residues 417-420 (DTPG). Residues 417-421 (DTPGH) and 471-474 (NKMD) each bind GTP. The G4 stretch occupies residues 471–474 (NKMD). The segment at 507–509 (SAH) is G5.

The protein belongs to the TRAFAC class translation factor GTPase superfamily. Classic translation factor GTPase family. IF-2 subfamily.

It is found in the cytoplasm. Functionally, one of the essential components for the initiation of protein synthesis. Protects formylmethionyl-tRNA from spontaneous hydrolysis and promotes its binding to the 30S ribosomal subunits. Also involved in the hydrolysis of GTP during the formation of the 70S ribosomal complex. This is Translation initiation factor IF-2 from Hahella chejuensis (strain KCTC 2396).